We begin with the raw amino-acid sequence, 309 residues long: Protein FdhE homolog (309 aa).

It belongs to the FdhE family.

It localises to the cytoplasm. Its function is as follows. Necessary for formate dehydrogenase activity. The chain is Protein FdhE homolog from Yersinia pestis bv. Antiqua (strain Antiqua).